Reading from the N-terminus, the 199-residue chain is Probable thymidylate kinase (199 aa).

13-20 lines the ATP pocket; that stretch reads GIDGAGKT.

Belongs to the thymidylate kinase family.

It carries out the reaction dTMP + ATP = dTDP + ADP. In Staphylothermus marinus (strain ATCC 43588 / DSM 3639 / JCM 9404 / F1), this protein is Probable thymidylate kinase.